The chain runs to 285 residues: Putative lipoprotein SCO4650 (285 aa).

An N-terminal signal peptide occupies residues 1 to 20 (MTGTTARRTVVSVAVSAALA). Cys21 is lipidated: N-palmitoyl cysteine. Cys21 carries the S-diacylglycerol cysteine lipid modification. The disordered stretch occupies residues 27-63 (GPGGSDDAGHSTGPTGSARPSASAPASSRAPALTGPS). A compositionally biased stretch (low complexity) spans 43–58 (SARPSASAPASSRAPA).

The protein resides in the cell membrane. This is Putative lipoprotein SCO4650 from Streptomyces coelicolor (strain ATCC BAA-471 / A3(2) / M145).